A 104-amino-acid polypeptide reads, in one-letter code: Cuticle protein 67, isoform B (104 aa).

A run of 7 repeats spans residues 7–10 (AAPA), 14–17 (AAPA), 21–24 (AAPA), 28–31 (AAPA), 85–88 (AAPA), 92–95 (AAPA), and 98–101 (AAPA).

In terms of biological role, component of the cuticle of migratory locust which contains more than 100 different structural proteins. This Locusta migratoria (Migratory locust) protein is Cuticle protein 67, isoform B.